The following is an 82-amino-acid chain: Translational regulator CsrA (82 aa).

The protein belongs to the CsrA/RsmA family. Homodimer; the beta-strands of each monomer intercalate to form a hydrophobic core, while the alpha-helices form wings that extend away from the core.

It is found in the cytoplasm. A translational regulator that binds mRNA to regulate translation initiation and/or mRNA stability. Usually binds in the 5'-UTR at or near the Shine-Dalgarno sequence preventing ribosome-binding, thus repressing translation. Its main target seems to be the major flagellin gene, while its function is anatagonized by FliW. The sequence is that of Translational regulator CsrA from Geobacillus sp. (strain WCH70).